A 60-amino-acid polypeptide reads, in one-letter code: Translational regulator CsrA (60 aa).

It belongs to the CsrA/RsmA family. Homodimer; the beta-strands of each monomer intercalate to form a hydrophobic core, while the alpha-helices form wings that extend away from the core.

It localises to the cytoplasm. In terms of biological role, a key translational regulator that binds mRNA to regulate translation initiation and/or mRNA stability. Mediates global changes in gene expression, shifting from rapid growth to stress survival by linking envelope stress, the stringent response and the catabolite repression systems. Usually binds in the 5'-UTR; binding at or near the Shine-Dalgarno sequence prevents ribosome-binding, repressing translation, binding elsewhere in the 5'-UTR can activate translation and/or stabilize the mRNA. Its function is antagonized by small RNA(s). This chain is Translational regulator CsrA, found in Histophilus somni (strain 2336) (Haemophilus somnus).